Here is a 77-residue protein sequence, read N- to C-terminus: MATFDDVKAVVVEQLSIDADAVKMESKIIEDLGADSLDVVELIMALEEKFEVEIPDSDAEKLIKIEDVVNYIDNLKK.

The 76-residue stretch at 1-76 folds into the Carrier domain; sequence MATFDDVKAV…DVVNYIDNLK (76 aa). Position 36 is an O-(pantetheine 4'-phosphoryl)serine (Ser36).

It belongs to the acyl carrier protein (ACP) family. 4'-phosphopantetheine is transferred from CoA to a specific serine of apo-ACP by AcpS. This modification is essential for activity because fatty acids are bound in thioester linkage to the sulfhydryl of the prosthetic group.

Its subcellular location is the cytoplasm. It functions in the pathway lipid metabolism; fatty acid biosynthesis. In terms of biological role, carrier of the growing fatty acid chain in fatty acid biosynthesis. The protein is Acyl carrier protein of Campylobacter jejuni subsp. jejuni serotype O:6 (strain 81116 / NCTC 11828).